Here is an 875-residue protein sequence, read N- to C-terminus: Phosphoenolpyruvate carboxylase (875 aa).

Residues His137 and Lys542 contribute to the active site.

The protein belongs to the PEPCase type 1 family. It depends on Mg(2+) as a cofactor.

It carries out the reaction oxaloacetate + phosphate = phosphoenolpyruvate + hydrogencarbonate. Forms oxaloacetate, a four-carbon dicarboxylic acid source for the tricarboxylic acid cycle. The polypeptide is Phosphoenolpyruvate carboxylase (Pseudomonas entomophila (strain L48)).